A 463-amino-acid chain; its full sequence is POU domain, class 2, transcription factor 2 (463 aa).

Disordered regions lie at residues 1–87 (MVHS…QPHL), 159–182 (QPRA…EEPS), 259–282 (SSLP…GRRR), 341–376 (PCSA…LSQA), and 393–463 (TLHP…PYQP). Positions 12–37 (RMSKPLEAEKQSLDSPSEHTDTERNG) are enriched in basic and acidic residues. Residues 41 to 60 (NHQNPQNKASPFSVSPTGPS) are compositionally biased toward polar residues. The span at 75–85 (AAPPPPQPAQP) shows a compositional bias: pro residues. In terms of domain architecture, POU-specific spans 179–253 (EEPSDLEELE…LLEKWLNDAE (75 aa)). Positions 259-272 (SSLPSPNQLSSPSL) are enriched in low complexity. Residues 281–340 (RRKKRTSIETNVRFALEKSFLANQKPTSEEILLIAEQLHMEKEVIRVWFCNRRQKEKRIN) constitute a DNA-binding region (homeobox). The tract at residues 373–394 (LSQASSSLSTTVTTLSSAVGTL) is leucine-zipper. Over residues 400–409 (AGGGGGGGGA) the composition is skewed to gly residues.

It belongs to the POU transcription factor family. Class-2 subfamily. Interacts with NR3C1, AR and PGR. Interacts with POU2AF1; the interaction increases POU2F2 transactivation activity. Highest in B cells, but also present in brain (neuronal and glial cells), intestine, kidney, and testes. In terms of tissue distribution, expressed at higher levels in B-cells than in neuronal cells. As to expression, expressed in neuronal cell lines and brain, but not dorsal root ganglia. Expressed at lower levels in neuronal cells than in B cells. In terms of tissue distribution, expressed in neuronal cell lines, and at lower levels in neuroblastoma and dorsal root ganglia. As to expression, widely expressed in the developing nervous system but expression is confined to very specific regions in the adult brain, it is expressed at a lower level in B cells. Either absent in, or expressed at very low levels in neuronal cells and brain. In terms of tissue distribution, expressed in all tissues tested: mammary gland, liver, spleen, lung, kidney intestine, uterus and ovary of a virgin mouse. Levels of isoform OCT2.7 are highest in spleen and lung. In mammary gland, expression is localized to the alveolus epithelial cells.

The protein resides in the cytoplasm. Its subcellular location is the nucleus. Its activity is regulated as follows. Transactivation activity is enhanced by transcriptional coactivator POU2AF1. Transcription factor that specifically binds to the octamer motif (5'-ATTTGCAT-3'). Regulates IL6 expression in B cells with POU2AF1. Regulates transcription in a number of tissues in addition to activating immunoglobulin gene expression. Modulates transcription transactivation by NR3C1, AR and PGR. Functionally, activates octamer-containing promoters. In terms of biological role, represses some promoters and activate others. Its function is as follows. Represses some promoters and activate others. Activates the U2 small nuclear RNA (snRNA) promoter. Unable to bind to the octamer motif, but can still activate the beta-casein gene promoter at low levels. This is POU domain, class 2, transcription factor 2 from Mus musculus (Mouse).